The sequence spans 445 residues: E3 ubiquitin-protein ligase MYLIP (445 aa).

The region spanning 1–279 is the FERM domain; that stretch reads MLCYVTRPDA…ETHAFYRCDT (279 aa). Fe cation is bound by residues cysteine 360, cysteine 363, and cysteine 368. An RING-type zinc finger spans residues 387-422; it reads CMVCCEEEINSTFCPCGHTVCCESCAAQLQSCPVCR. The segment at 431-433 is critical for homodimerization; that stretch reads VYL.

As to quaternary structure, homodimer. Interacts with the E2 ubiquitin-conjugating enzyme, UBE2D1 (via RING-type zinc finger). Interacts with myosin regulatory light chain (MRLC) and TMEM4. Post-translationally, autoubiquitinated. Ubiquitously expressed.

It is found in the cytoplasm. It localises to the cell membrane. It carries out the reaction S-ubiquitinyl-[E2 ubiquitin-conjugating enzyme]-L-cysteine + [acceptor protein]-L-lysine = [E2 ubiquitin-conjugating enzyme]-L-cysteine + N(6)-ubiquitinyl-[acceptor protein]-L-lysine.. It participates in protein modification; protein ubiquitination. Its activity is regulated as follows. Can bind 1 iron ion per dimer. Iron binding seems to decrease LDLR degradation activity. In terms of biological role, E3 ubiquitin-protein ligase that mediates ubiquitination and subsequent proteasomal degradation of myosin regulatory light chain (MRLC), LDLR, VLDLR and LRP8. Activity depends on E2 enzymes of the UBE2D family. Proteasomal degradation of MRLC leads to inhibit neurite outgrowth in presence of NGF by counteracting the stabilization of MRLC by saposin-like protein (CNPY2/MSAP) and reducing CNPY2-stimulated neurite outgrowth. Acts as a sterol-dependent inhibitor of cellular cholesterol uptake by mediating ubiquitination and subsequent degradation of LDLR. The chain is E3 ubiquitin-protein ligase MYLIP (MYLIP) from Homo sapiens (Human).